Consider the following 361-residue polypeptide: MALTRLLIKDFRNIEAADLALVPGFNFLVGANGSGKTSVLEAIYTLGHGRAFRSIQAGRVIRHDQPEFVLHGRIDGTETERAVGLSKNRQGDSKVRIDGSDGHKVAELAQLLPIQLITPEGFTLLNGGPKYRRAFLDWGCFHNEPGFFAAWSNMKRLQRQRNAALRQVSHYGQLRAWDQELVPLAERISEWRAQYSAAIANDIAATCTQFLPEFSLSFSFQRGWDKESEYAELLERQFERDRMLGYTALGPHKADFRIRTSGVAVEDMLSRGQLKLLMCALRLAQGEFLTRQNGLRCLYLIDDFASELDSTRRRLLAERLKATHAQVFVSAVSAEQIEDMIGEKGKMFRVEQGKITVQSQD.

Residue 30 to 37 (GANGSGKT) participates in ATP binding.

Belongs to the RecF family.

It localises to the cytoplasm. Functionally, the RecF protein is involved in DNA metabolism; it is required for DNA replication and normal SOS inducibility. RecF binds preferentially to single-stranded, linear DNA. It also seems to bind ATP. The chain is DNA replication and repair protein RecF from Pectobacterium atrosepticum (strain SCRI 1043 / ATCC BAA-672) (Erwinia carotovora subsp. atroseptica).